A 413-amino-acid polypeptide reads, in one-letter code: Serine hydroxymethyltransferase (413 aa).

(6S)-5,6,7,8-tetrahydrofolate is bound by residues Leu119 and 123–125 (GHL). The residue at position 228 (Lys228) is an N6-(pyridoxal phosphate)lysine. A (6S)-5,6,7,8-tetrahydrofolate-binding site is contributed by Glu243.

This sequence belongs to the SHMT family. As to quaternary structure, homodimer. Pyridoxal 5'-phosphate is required as a cofactor.

The protein resides in the cytoplasm. The catalysed reaction is (6R)-5,10-methylene-5,6,7,8-tetrahydrofolate + glycine + H2O = (6S)-5,6,7,8-tetrahydrofolate + L-serine. It participates in one-carbon metabolism; tetrahydrofolate interconversion. It functions in the pathway amino-acid biosynthesis; glycine biosynthesis; glycine from L-serine: step 1/1. In terms of biological role, catalyzes the reversible interconversion of serine and glycine with tetrahydrofolate (THF) serving as the one-carbon carrier. This reaction serves as the major source of one-carbon groups required for the biosynthesis of purines, thymidylate, methionine, and other important biomolecules. Also exhibits THF-independent aldolase activity toward beta-hydroxyamino acids, producing glycine and aldehydes, via a retro-aldol mechanism. The polypeptide is Serine hydroxymethyltransferase (Thermoanaerobacter pseudethanolicus (strain ATCC 33223 / 39E) (Clostridium thermohydrosulfuricum)).